Consider the following 55-residue polypeptide: MYNAPMAQEMSYYEHVQRRHEEKGCLYACIFTALCCFCCYETCECCLDCLCCCCN.

The chain crosses the membrane as a helical span at residues 24-40 (GCLYACIFTALCCFCCY).

The protein belongs to the CYSTM1 family.

Its subcellular location is the cell membrane. The protein localises to the secreted. The protein resides in the cell wall. In terms of biological role, confers resistance to heavy metal ions (e.g. cadmium (CdCl(2)) and copper (CuCl(2))) by chelating them at the plasma membrane of root cells, thus stopping their entry and reducing their accumulation. Binds to aluminium (Al). The sequence is that of Protein CADMIUM TOLERANCE 1 from Oryza sativa subsp. indica (Rice).